We begin with the raw amino-acid sequence, 566 residues long: Sorting nexin lst-4 (566 aa).

The SH3 domain occupies 1–61; that stretch reads MAQVKAEYDF…PESYVTPYQA (61 aa). The segment at 59–179 is disordered; sequence YQASRPPPVL…DRGSNKVNKN (121 aa). Positions 63 to 77 are enriched in pro residues; that stretch reads RPPPVLPPPLPPTSS. Residues 127–140 show a composition bias toward acidic residues; the sequence is DDFDDEWTDEDDEQ. A compositionally biased stretch (polar residues) spans 143-154; that stretch reads TRPNVQSSIGSN. The span at 155–173 shows a compositional bias: basic and acidic residues; sequence SRRDLSRSHSEHGGPDRGS. Positions 227-339 constitute a PX domain; the sequence is YTCIVDKPKK…HFISCTDEKD (113 aa). Positions 362-566 constitute a BAR domain; it reads TVPHQPLDPN…KLTSLAARYD (205 aa).

The protein belongs to the sorting nexin family. As to quaternary structure, homodimer. Isoform d interacts (via SH3 domain) with dyn-1. In terms of tissue distribution, expressed in vulval precursor cells (VPCs) and apoptotic germ cells. Colocalizes with actin, dyn-1 and rab-5 in early phagosomes.

It localises to the cytoplasm. Its subcellular location is the cytoplasmic vesicle. It is found in the phagosome membrane. Functionally, involved in the signaling of vulval development by acting as a negative regulator of epidermal growth factor receptor (EGFR) signaling. Aids in phagosomal membrane tubule formation which is required for phagosomal fusion with endosomes and lysosomes. Also recruits rab-7 to phagosomes by an interaction with dyn-1. These are events leading to phagosome maturation which is a step in apoptotic cell corpse clearance. Binds phosphatidylinositol-3,4,5-trisphosphate. This chain is Sorting nexin lst-4, found in Caenorhabditis elegans.